The following is a 136-amino-acid chain: MARTKQTARKSTGGKAPRKQLVTKAAKKCAPATGGVKKPHRYRPGTVALREIRRYQKSTELLIRKLPFQRLVREIAQDFKTDLRFQRSAVMALQEASEAYLVALFEDTNLCAIHAKRVTIMPKDIQLARRIRGERA.

Residues 1–42 (MARTKQTARKSTGGKAPRKQLVTKAAKKCAPATGGVKKPHRY) form a disordered region. R3 bears the Asymmetric dimethylarginine; by PRMT6 mark. At T4 the chain carries Phosphothreonine; by HASPIN. An Allysine; alternate modification is found at K5. K5 carries the N6,N6,N6-trimethyllysine; alternate modification. K5 carries the N6,N6-dimethyllysine; alternate modification. K5 is modified (N6-(2-hydroxyisobutyryl)lysine; alternate). K5 carries the N6-acetyllysine; alternate modification. N6-methyllysine; alternate is present on K5. Position 6 is a 5-glutamyl dopamine; alternate (Q6). Q6 bears the 5-glutamyl serotonin; alternate mark. T7 is modified (phosphothreonine; by PKC). The residue at position 10 (K10) is an N6-(2-hydroxyisobutyryl)lysine; alternate. K10 carries the N6-lactoyllysine; alternate modification. K10 carries the N6-methylated lysine modification. S11 carries the ADP-ribosylserine; alternate modification. Position 11 is a phosphoserine; alternate; by AURKB, AURKC, RPS6KA3, RPS6KA4 and RPS6KA5 (S11). T12 is modified (phosphothreonine; by PKC). K15 is subject to N6-(2-hydroxyisobutyryl)lysine; alternate. K15 carries the post-translational modification N6-lactoyllysine; alternate. K15 carries the N6-acetyllysine modification. N6-glutaryllysine; alternate is present on K15. The residue at position 18 (R18) is an Asymmetric dimethylarginine. N6-(2-hydroxyisobutyryl)lysine; alternate is present on residues K19, K24, K28, and K37. Position 19 is an N6-acetyllysine; alternate (K19). N6-lactoyllysine; alternate is present on residues K19, K24, and K28. Residues K19, K24, and K28 each carry the N6-glutaryllysine; alternate modification. Residues K19 and K24 each carry the N6-butyryllysine; alternate modification. N6-methylated lysine; alternate is present on K19. An N6-acetyllysine modification is found at K24. An N6-acetyllysine; alternate mark is found at K28 and K37. An N6-methylated lysine; alternate mark is found at K28 and K37. Y42 carries the post-translational modification Phosphotyrosine. An N6-(2-hydroxyisobutyryl)lysine; alternate modification is found at K57. N6-lactoyllysine; alternate is present on K57. Position 57 is an N6-glutaryllysine; alternate (K57). K57 carries the N6-succinyllysine; alternate modification. A Phosphoserine modification is found at S58. An N6-(2-hydroxyisobutyryl)lysine; alternate mark is found at K65 and K80. K65 and K80 each carry N6-methylated lysine. K80 carries the N6-lactoyllysine; alternate modification. An N6-glutaryllysine; alternate modification is found at K80. N6-succinyllysine; alternate is present on K80. T81 is modified (phosphothreonine). N6-acetyllysine; alternate occurs at positions 116 and 123. 2 positions are modified to N6-glutaryllysine; alternate: K116 and K123. Residue K123 is modified to N6-(2-hydroxyisobutyryl)lysine; alternate. Residue K123 is modified to N6-methylated lysine; alternate. The residue at position 123 (K123) is an N6-succinyllysine; alternate.

This sequence belongs to the histone H3 family. As to quaternary structure, the nucleosome is a histone octamer containing two molecules each of H2A, H2B, H3 and H4 assembled in one H3-H4 heterotetramer and two H2A-H2B heterodimers. The octamer wraps approximately 147 bp of DNA. Acetylation is generally linked to gene activation. Acetylation on Lys-19 (H3K18ac) and Lys-24 (H3K24ac) favors methylation at Arg-18 (H3R17me). Acetylation at Lys-123 (H3K122ac) by EP300/p300 plays a central role in chromatin structure: localizes at the surface of the histone octamer and stimulates transcription, possibly by promoting nucleosome instability. In terms of processing, asymmetric dimethylation at Arg-18 (H3R17me2a) is linked to gene activation. Asymmetric dimethylation at Arg-3 (H3R2me2a) by PRMT6 is linked to gene repression and is mutually exclusive with H3 Lys-5 methylation (H3K4me2 and H3K4me3). H3R2me2a is present at the 3' of genes regardless of their transcription state and is enriched on inactive promoters, while it is absent on active promoters. Post-translationally, methylation at Lys-5 (H3K4me) and Lys-80 (H3K79me) are linked to gene activation. Methylation at Lys-5 (H3K4me) facilitates subsequent acetylation of H3 and H4. Methylation at Lys-80 (H3K79me) is associated with DNA double-strand break (DSB) responses and is a specific target for TP53BP1. Methylation at Lys-10 (H3K9me) and Lys-28 (H3K27me) are linked to gene repression. Methylation at Lys-10 (H3K9me) is a specific target for HP1 proteins (CBX1, CBX3 and CBX5) and prevents subsequent phosphorylation at Ser-11 (H3S10ph) and acetylation of H3 and H4. Methylation at Lys-5 (H3K4me) and Lys-80 (H3K79me) require preliminary monoubiquitination of H2B at 'Lys-120'. Phosphorylated at Thr-4 (H3T3ph) by HASPIN during prophase and dephosphorylated during anaphase. Phosphorylation at Ser-11 (H3S10ph) by aurkb is crucial for chromosome condensation and cell-cycle progression during mitosis and meiosis. In addition phosphorylation at Ser-11 (H3S10ph) by rps6ka4 and rps6ka5 is important during interphase because it enables the transcription of genes following external stimulation, like mitogens, stress, growth factors or UV irradiation and result in the activation of genes, such as c-fos and c-jun. Phosphorylation at Ser-11 (H3S10ph), which is linked to gene activation, prevents methylation at Lys-10 (H3K9me) but facilitates acetylation of H3 and H4. Phosphorylation at Ser-11 (H3S10ph) by aurkb mediates the dissociation of HP1 proteins (cbx1, cbx3 and cbx5) from heterochromatin. Phosphorylation at Ser-11 (H3S10ph) is also an essential regulatory mechanism for neoplastic cell transformation. Phosphorylation at Thr-7 (H3T6ph) by prkcb is a specific tag for epigenetic transcriptional activation that prevents demethylation of Lys-5 (H3K4me) by lsd1/kdm1a. At centromeres, specifically phosphorylated at Thr-12 (H3T11ph) from prophase to early anaphase, by DAPK3 and PKN1. Phosphorylation at Thr-12 (H3T11ph) by PKN1 or isoform M2 of PKM (PKM2) is a specific tag for epigenetic transcriptional activation that promotes demethylation of Lys-10 (H3K9me) by kdm4c/jmjd2c. Phosphorylation at Tyr-42 (H3Y41ph) by jak2 promotes exclusion of cbx5 (HP1 alpha) from chromatin. In terms of processing, lysine deamination at Lys-5 (H3K4all) to form allysine only takes place on H3K4me3 and results in gene repression. Post-translationally, butyrylation of histones marks active promoters and competes with histone acetylation. It is present during late spermatogenesis. Succinylation at Lys-80 (H3K79succ) by KAT2A takes place with a maximum frequency around the transcription start sites of genes. It gives a specific tag for epigenetic transcription activation. Desuccinylation at Lys-123 (H3K122succ) by SIRT7 in response to DNA damage promotes chromatin condensation and double-strand breaks (DSBs) repair. In terms of processing, serine ADP-ribosylation constitutes the primary form of ADP-ribosylation of proteins in response to DNA damage. Serine ADP-ribosylation at Ser-11 (H3S10ADPr) is mutually exclusive with phosphorylation at Ser-11 (H3S10ph) and impairs acetylation at Lys-10 (H3K9ac).

It is found in the nucleus. The protein resides in the chromosome. In terms of biological role, core component of nucleosome. Nucleosomes wrap and compact DNA into chromatin, limiting DNA accessibility to the cellular machineries which require DNA as a template. Histones thereby play a central role in transcription regulation, DNA repair, DNA replication and chromosomal stability. DNA accessibility is regulated via a complex set of post-translational modifications of histones, also called histone code, and nucleosome remodeling. This is Histone H3.3C (h3-5) from Xenopus laevis (African clawed frog).